We begin with the raw amino-acid sequence, 236 residues long: Ribonuclease PH (236 aa).

Residues R86 and 124–126 (GTR) contribute to the phosphate site.

The protein belongs to the RNase PH family. Homohexameric ring arranged as a trimer of dimers.

It catalyses the reaction tRNA(n+1) + phosphate = tRNA(n) + a ribonucleoside 5'-diphosphate. Functionally, phosphorolytic 3'-5' exoribonuclease that plays an important role in tRNA 3'-end maturation. Removes nucleotide residues following the 3'-CCA terminus of tRNAs; can also add nucleotides to the ends of RNA molecules by using nucleoside diphosphates as substrates, but this may not be physiologically important. Probably plays a role in initiation of 16S rRNA degradation (leading to ribosome degradation) during starvation. This is Ribonuclease PH from Thermodesulfovibrio yellowstonii (strain ATCC 51303 / DSM 11347 / YP87).